We begin with the raw amino-acid sequence, 340 residues long: Ketol-acid reductoisomerase (NADP(+)) (340 aa).

The region spanning 3–182 is the KARI N-terminal Rossmann domain; the sequence is VTMYYEEDVE…GCARVGIIET (180 aa). NADP(+)-binding positions include 26-29, Arg49, Ser53, and 83-86; these read YGSQ and DELQ. His108 is a catalytic residue. An NADP(+)-binding site is contributed by Gly134. Positions 183 to 328 constitute a KARI C-terminal knotted domain; that stretch reads TFKEETEEDL…AELRKAMPFT (146 aa). The Mg(2+) site is built by Asp191, Glu195, Glu227, and Glu231. Ser252 contributes to the substrate binding site.

The protein belongs to the ketol-acid reductoisomerase family. Mg(2+) is required as a cofactor.

The catalysed reaction is (2R)-2,3-dihydroxy-3-methylbutanoate + NADP(+) = (2S)-2-acetolactate + NADPH + H(+). It catalyses the reaction (2R,3R)-2,3-dihydroxy-3-methylpentanoate + NADP(+) = (S)-2-ethyl-2-hydroxy-3-oxobutanoate + NADPH + H(+). It participates in amino-acid biosynthesis; L-isoleucine biosynthesis; L-isoleucine from 2-oxobutanoate: step 2/4. It functions in the pathway amino-acid biosynthesis; L-valine biosynthesis; L-valine from pyruvate: step 2/4. Functionally, involved in the biosynthesis of branched-chain amino acids (BCAA). Catalyzes an alkyl-migration followed by a ketol-acid reduction of (S)-2-acetolactate (S2AL) to yield (R)-2,3-dihydroxy-isovalerate. In the isomerase reaction, S2AL is rearranged via a Mg-dependent methyl migration to produce 3-hydroxy-3-methyl-2-ketobutyrate (HMKB). In the reductase reaction, this 2-ketoacid undergoes a metal-dependent reduction by NADPH to yield (R)-2,3-dihydroxy-isovalerate. In Lactococcus lactis subsp. cremoris (strain SK11), this protein is Ketol-acid reductoisomerase (NADP(+)).